A 388-amino-acid chain; its full sequence is Zinc finger C2H2 protein ECU10_0150 (388 aa).

Residues 299-322 (YKCGFCGKAFESEKFIFNHFNNKH) form a C2H2-type zinc finger.

The chain is Zinc finger C2H2 protein ECU10_0150 from Encephalitozoon cuniculi (strain GB-M1) (Microsporidian parasite).